A 691-amino-acid chain; its full sequence is DNA ligase (691 aa).

NAD(+) is bound by residues 53-57 (DSEYD), 102-103 (SL), and Glu135. Catalysis depends on Lys137, which acts as the N6-AMP-lysine intermediate. Residues Arg158, Glu195, Lys310, and Lys334 each coordinate NAD(+). Zn(2+) is bound by residues Cys428, Cys431, Cys446, and Cys452. Residues 613–691 (SEGLPLDGQT…EEEFLVLVGE (79 aa)) enclose the BRCT domain.

The protein belongs to the NAD-dependent DNA ligase family. LigA subfamily. Mg(2+) serves as cofactor. Mn(2+) is required as a cofactor.

The catalysed reaction is NAD(+) + (deoxyribonucleotide)n-3'-hydroxyl + 5'-phospho-(deoxyribonucleotide)m = (deoxyribonucleotide)n+m + AMP + beta-nicotinamide D-nucleotide.. In terms of biological role, DNA ligase that catalyzes the formation of phosphodiester linkages between 5'-phosphoryl and 3'-hydroxyl groups in double-stranded DNA using NAD as a coenzyme and as the energy source for the reaction. It is essential for DNA replication and repair of damaged DNA. The protein is DNA ligase of Psychrobacter cryohalolentis (strain ATCC BAA-1226 / DSM 17306 / VKM B-2378 / K5).